We begin with the raw amino-acid sequence, 388 residues long: Zinc finger protein ubi-d4 A (388 aa).

The tract at residues 60–190 (GPGSAPGQLY…AKGKGIGSAR (131 aa)) is disordered. Composition is skewed to basic and acidic residues over residues 97–107 (PDPEQMLKKEG) and 123–137 (DPIE…RDDD). Positions 156–170 (PDDFLDDLDDEDYEE) are enriched in acidic residues. The C2H2-type zinc-finger motif lies at 205 to 228 (YACDICGKRYKNRPGLSYHYAHSH). Positions 233 to 264 (EGAGAEDKEDSQPPTPIMHRPEEQKSKKGPDG) are disordered. Residues 251-262 (HRPEEQKSKKGP) are compositionally biased toward basic and acidic residues. 2 PHD-type zinc fingers span residues 269–329 (NNYC…CKCC) and 326–376 (CKCC…CLDL).

This sequence belongs to the requiem/DPF family.

The protein localises to the cytoplasm. It localises to the nucleus. Functionally, may be a transcription factor required for the apoptosis response following survival factor withdrawal from myeloid cells. Might also have a role in the development and maturation of lymphoid cells. The polypeptide is Zinc finger protein ubi-d4 A (req-a) (Xenopus laevis (African clawed frog)).